A 1390-amino-acid polypeptide reads, in one-letter code: DNA-directed RNA polymerase subunit beta' (1390 aa).

Zn(2+) is bound by residues cysteine 70, cysteine 72, cysteine 85, and cysteine 88. Positions 460, 462, and 464 each coordinate Mg(2+). Residues cysteine 814, cysteine 888, cysteine 895, and cysteine 898 each contribute to the Zn(2+) site.

Belongs to the RNA polymerase beta' chain family. In terms of assembly, the RNAP catalytic core consists of 2 alpha, 1 beta, 1 beta' and 1 omega subunit. When a sigma factor is associated with the core the holoenzyme is formed, which can initiate transcription. Requires Mg(2+) as cofactor. It depends on Zn(2+) as a cofactor.

The catalysed reaction is RNA(n) + a ribonucleoside 5'-triphosphate = RNA(n+1) + diphosphate. In terms of biological role, DNA-dependent RNA polymerase catalyzes the transcription of DNA into RNA using the four ribonucleoside triphosphates as substrates. This chain is DNA-directed RNA polymerase subunit beta', found in Pseudoalteromonas translucida (strain TAC 125).